Reading from the N-terminus, the 124-residue chain is Large ribosomal subunit protein bL12 (124 aa).

Belongs to the bacterial ribosomal protein bL12 family. Homodimer. Part of the ribosomal stalk of the 50S ribosomal subunit. Forms a multimeric L10(L12)X complex, where L10 forms an elongated spine to which 2 to 4 L12 dimers bind in a sequential fashion. Binds GTP-bound translation factors.

In terms of biological role, forms part of the ribosomal stalk which helps the ribosome interact with GTP-bound translation factors. Is thus essential for accurate translation. This is Large ribosomal subunit protein bL12 from Nitrosomonas europaea (strain ATCC 19718 / CIP 103999 / KCTC 2705 / NBRC 14298).